A 293-amino-acid polypeptide reads, in one-letter code: MSNRAESFLVGLVGDGVMPSLTPHMHEREGDVQGLRYLYRPIDLLELGLPGESVGELLQSAHRMGFNGLNITHPCKQLVLDHLDEIAPDARRLGAVNTVIIRDGRFTGHNTDFSGFAAALASGLPDAKLDRVVQLGAGGAGSAVAYALLTAGVRHLDLVDTDAARCAERAAELAGFFPDSSVTARTTAELPQLMPLADGLVHCTPVGMAAHPGAPLDLSLLESRHWVADIVYRPIDTELVREARAKGCEVLDGGRMAVGQAADAFRIFTGLEADADRMRAHFLELVAAEEVTA.

Residues 20-22 and threonine 72 each bind shikimate; that span reads SLT. Lysine 76 acts as the Proton acceptor in catalysis. Shikimate-binding residues include asparagine 97 and aspartate 112. Residues 136–140 and isoleucine 230 contribute to the NADP(+) site; that span reads GAGGA. Residue tyrosine 232 coordinates shikimate. An NADP(+)-binding site is contributed by glycine 253.

Belongs to the shikimate dehydrogenase family. In terms of assembly, homodimer.

The catalysed reaction is shikimate + NADP(+) = 3-dehydroshikimate + NADPH + H(+). It participates in metabolic intermediate biosynthesis; chorismate biosynthesis; chorismate from D-erythrose 4-phosphate and phosphoenolpyruvate: step 4/7. Functionally, involved in the biosynthesis of the chorismate, which leads to the biosynthesis of aromatic amino acids. Catalyzes the reversible NADPH linked reduction of 3-dehydroshikimate (DHSA) to yield shikimate (SA). In Arthrobacter sp. (strain FB24), this protein is Shikimate dehydrogenase (NADP(+)).